The sequence spans 176 residues: Ribosome maturation factor RimM (176 aa).

The 75-residue stretch at 99-173 (ADEYYWHDLL…TMTITPLEGL (75 aa)) folds into the PRC barrel domain.

It belongs to the RimM family. Binds ribosomal protein uS19.

The protein resides in the cytoplasm. In terms of biological role, an accessory protein needed during the final step in the assembly of 30S ribosomal subunit, possibly for assembly of the head region. Essential for efficient processing of 16S rRNA. May be needed both before and after RbfA during the maturation of 16S rRNA. It has affinity for free ribosomal 30S subunits but not for 70S ribosomes. The sequence is that of Ribosome maturation factor RimM from Trichlorobacter lovleyi (strain ATCC BAA-1151 / DSM 17278 / SZ) (Geobacter lovleyi).